Consider the following 1571-residue polypeptide: Paternally-expressed gene 3 protein (1571 aa).

Disordered stretches follow at residues Met-1–Gln-120 and Ala-137–Gly-241. Composition is skewed to basic and acidic residues over residues Gly-35–Pro-56, Phe-80–Asp-99, Pro-169–Ser-186, Lys-193–Pro-215, and Asp-223–Gly-241. The interval Ala-199 to Glu-265 is 10 X 5 AA repeat of P-H-X-X-E. The segment at Ala-199–Glu-265 is 3 X 5 AA repeat of P-H-D-D-K. C2H2-type zinc fingers lie at residues Tyr-325–His-347, Phe-378–His-400, Tyr-436–His-458, and Tyr-520–His-542. The segment at Lys-456–Arg-495 is disordered. Disordered regions lie at residues Ala-585 to Pro-649, Glu-672 to Gly-713, and Arg-764 to Lys-820. The segment covering Ser-592–Phe-614 has biased composition (basic and acidic residues). Composition is skewed to polar residues over residues Gly-770–Val-781 and Asp-799–Ser-808. Residues Val-809–Lys-820 are compositionally biased toward basic and acidic residues. The segment at Phe-850–His-872 adopts a C2H2-type 5 zinc-finger fold. A disordered region spans residues Phe-937–Asp-1070. The span at Glu-940–Asp-1070 shows a compositional bias: basic and acidic residues. Repeat copies occupy residues Pro-942–Glu-946, Pro-967–Glu-971, Pro-987–Lys-991, Pro-992–Glu-996, Pro-997–Lys-1001, Pro-1002–Glu-1006, Pro-1007–Lys-1011, Pro-1012–Glu-1016, Pro-1017–Glu-1021, Pro-1022–Glu-1026, Pro-1027–Glu-1031, Pro-1032–Glu-1036, and Pro-1047–Glu-1051. C2H2-type zinc fingers lie at residues Tyr-1091–His-1113, Tyr-1147–His-1169, Ile-1209–His-1231, and Phe-1266–His-1289. A C2H2-type 10; degenerate zinc finger spans residues Tyr-1317–His-1339. The disordered stretch occupies residues Asn-1373 to Tyr-1487. Composition is skewed to acidic residues over residues Ala-1377 to Ala-1397, Glu-1405 to Ala-1418, and Asp-1431 to Glu-1485. C2H2-type zinc fingers lie at residues Tyr-1488–His-1510 and Phe-1547–His-1569.

This sequence belongs to the krueppel C2H2-type zinc-finger protein family. Homodimer. Interacts with SIAH1A and SIAH2. Interacts with TRAF2. As to expression, brain, glial cells, neurons, skeletal muscle, uterus and placenta. In the placenta it is found in all trophoblast cells.

The protein resides in the nucleus. It is found in the cytoplasm. Induces apoptosis in cooperation with SIAH1A. Acts as a mediator between p53/TP53 and BAX in a neuronal death pathway that is activated by DNA damage. Acts synergistically with TRAF2 and inhibits TNF induced apoptosis through activation of NF-kappa-B. Plays a role in regulating maternal behavior and offspring growth. This Mus musculus (Mouse) protein is Paternally-expressed gene 3 protein (Peg3).